We begin with the raw amino-acid sequence, 259 residues long: 5'-nucleotidase SurE (259 aa).

A divalent metal cation-binding residues include aspartate 8, aspartate 9, serine 40, and asparagine 92.

It belongs to the SurE nucleotidase family. Requires a divalent metal cation as cofactor.

It is found in the cytoplasm. The catalysed reaction is a ribonucleoside 5'-phosphate + H2O = a ribonucleoside + phosphate. Functionally, nucleotidase that shows phosphatase activity on nucleoside 5'-monophosphates. In Stenotrophomonas maltophilia (strain R551-3), this protein is 5'-nucleotidase SurE.